Reading from the N-terminus, the 250-residue chain is MIRQIQKRPAGSNANPLFLFHDASGTISNYLALGLLGRDVYAIADSRIKAKGDESLQDMSRRYYALIKSTVAEGTILLGGWSLGGMTALQVAWIFSRDPKVNVAGVLMIDSPFPDYRHALSLALESPPSEDGPASTRSDIEKAMLQTVTMLHKWKIPVWRREPQPHTVMLCAGNDVDSDHVALSLVDQFRDSPTLGWNERAGPSVVNESYPIQGHHFSIFDPRNIDSVTKTIVTVTAAMEMMAPEDDEDY.

It belongs to the AMT4 thioesterase family.

Its pathway is secondary metabolite biosynthesis. Functionally, thioesterase; part of the gene cluster that mediates the biosynthesis of the lipopeptides W493 A and B. W493 A and B consist of six amino acid residues D-allo-thr, L-Ala, D-Ala, L-Gln, D-Tyr, and L-Val/L-Ile linked to a 3-hydroxy-4-methyltetradecanoic acid polyketide chain. The biosynthesis starts with formation of the linear polyketide chain by the highly reducing polyketide synthase PKS40. The gene cluster contains a putative acyl-CoA ligase (FPSE_09184) for formation of a CoA thioester polyketide. The thiol bond could be hydrolyzed by the putative thioesterase (FPSE_09186) and then accepted by the first T domain in module 1 of NRPS32. The second T domain is responsible for accepting a threonine, which is adenylated by the A domain and epimerized to the D-allo-threonine formed by the E domain. The five successive modules incorporate Ala, Ala, Gln, Tyr, and Val/Ile into the final product, which is released by cyclization. The chain is Thioesterase FPSE_09186 from Fusarium pseudograminearum (strain CS3096) (Wheat and barley crown-rot fungus).